We begin with the raw amino-acid sequence, 367 residues long: MRHANVTLTRFLAGDADHLMTTRPPTALQAVLHEVAASVKTIASALARGTLGDSAHADSVAGGAVLAYATRRRKLAETAARNRGADDAGKPEYQLAFDPLNCPWNADINGTAGSIFSVMRVQSQGSDADGAADTCAQAYGELDCEPYDEPYGAPFLQPGREQAAAGYTIYGPATMLIVTLGEGTHGFTLDGQTDEFMLTHPSIRIPAETGEIAVDASNERFWEPPVRRYVHECRDGRAGCRERDFSLRWSDALVAEVHRILMRGGLFLMPRDYRTRSAMRGRLSAVYDASPLGFLVEQAGGMATTGRERVLDAAPRTFHERMPLILGSASEVTRIGRYHREHDLGIDAPFTSPLFRERSLFLPETSL.

This sequence belongs to the FBPase class 1 family. Homotetramer.

Its subcellular location is the cytoplasm. It catalyses the reaction beta-D-fructose 1,6-bisphosphate + H2O = beta-D-fructose 6-phosphate + phosphate. Its pathway is carbohydrate biosynthesis; gluconeogenesis. This Paraburkholderia phymatum (strain DSM 17167 / CIP 108236 / LMG 21445 / STM815) (Burkholderia phymatum) protein is Fructose-1,6-bisphosphatase class 1 3.